A 181-amino-acid chain; its full sequence is MARSAPLDETNSGAAKAPAISREQYRDAMARLGAAVTIVTTDGPGGRAGFTASAVCSVTDSPPTLLVCLNKSSSAAHAVHANGVVCVNTLAAGHEALSNLFGGRTPPEERFAAGQWHTSATGAPILVGAVVAFDCRIVKTVEVGTHDVLFCEVVGLAEGGGREGLIYFSRRYHAVAGTPEG.

It belongs to the non-flavoprotein flavin reductase family. RutF subfamily.

The catalysed reaction is FMNH2 + NAD(+) = FMN + NADH + 2 H(+). Its function is as follows. Catalyzes the reduction of FMN to FMNH2 which is used to reduce pyrimidine by RutA via the Rut pathway. This chain is FMN reductase (NADH) RutF, found in Ancylobacter novellus (strain ATCC 8093 / DSM 506 / JCM 20403 / CCM 1077 / IAM 12100 / NBRC 12443 / NCIMB 10456) (Starkeya novella).